Reading from the N-terminus, the 72-residue chain is Cytochrome b-c1 complex subunit 9 (72 aa).

At methionine 1–tyrosine 27 the chain is on the mitochondrial matrix side. A helical membrane pass occupies residues valine 28 to asparagine 53. Topologically, residues asparagine 54–glutamate 72 are mitochondrial intermembrane.

It belongs to the UQCR10/QCR9 family. In terms of assembly, component of the ubiquinol-cytochrome c oxidoreductase (cytochrome b-c1 complex, complex III, CIII), a multisubunit enzyme composed of 3 respiratory subunits cytochrome b, cytochrome c1 and Rieske protein, 2 core protein subunits, and additional low-molecular weight protein subunits. The complex exists as an obligatory dimer and forms supercomplexes (SCs) in the inner mitochondrial membrane with cytochrome c oxidase (complex IV, CIV).

Its subcellular location is the mitochondrion inner membrane. In terms of biological role, component of the ubiquinol-cytochrome c oxidoreductase, a multisubunit transmembrane complex that is part of the mitochondrial electron transport chain which drives oxidative phosphorylation. The respiratory chain contains 3 multisubunit complexes succinate dehydrogenase (complex II, CII), ubiquinol-cytochrome c oxidoreductase (cytochrome b-c1 complex, complex III, CIII) and cytochrome c oxidase (complex IV, CIV), that cooperate to transfer electrons derived from NADH and succinate to molecular oxygen, creating an electrochemical gradient over the inner membrane that drives transmembrane transport and the ATP synthase. The cytochrome b-c1 complex catalyzes electron transfer from ubiquinol to cytochrome c, linking this redox reaction to translocation of protons across the mitochondrial inner membrane, with protons being carried across the membrane as hydrogens on the quinol. In the process called Q cycle, 2 protons are consumed from the matrix, 4 protons are released into the intermembrane space and 2 electrons are passed to cytochrome c. The protein is Cytochrome b-c1 complex subunit 9 of Solanum tuberosum (Potato).